A 91-amino-acid chain; its full sequence is Small ribosomal subunit protein bS16 (91 aa).

Belongs to the bacterial ribosomal protein bS16 family.

This is Small ribosomal subunit protein bS16 from Exiguobacterium sp. (strain ATCC BAA-1283 / AT1b).